Reading from the N-terminus, the 551-residue chain is MARSGLDRIDISPQPAKKIARVGGLQHPFVKTDINTINVEHHFIDTLQKTSPNMDCRGMTAGIFIRLSHMYKILTTLESPNDVTYTTPGSTNALFFKTSTQPQEPRPEELASKLTQDDIKRILLTIESETRGQGDNAIWTLLRRNLITASTLKWSVSGPVIPPQWFYHHNTTDTYGDAAAMAFGKTNEPAARAIVEALFIDPADIRTPDHLTPEATTKFFNFDMLNTKSPSLLVGTPRIGTYECGLLIDVRTGLIGASLDVLVCDRDPLTGTLNPHPAETDISFFEIKCRAKYLFDPDDKNNPLGRTYTTLINRPTMANLRDFLYTIKNPCVSFFGPSANPSTREALITDHVEWKRLGFKGGRALTELDAHHLGLNRTISSRVWVFNDPDIQKGTITTIAWATGDTALQIPVFANPRHANFKQIAVQTYVLSGYFPALKLRPFLVTFIGRVRRPHEVGVPLRVDTQAAAIYEYNWPTIPPHCAVPVIAVLTPIEVDVPRVTQILKDTGNNAITSALRSLRWDNLHPAVEEESVDCANGTTSLLRATEKPLL.

This sequence belongs to the herpesviridae alkaline nuclease family. Interacts with major DNA-binding protein; this interaction increases the nuclease processivity of the alkaline exonuclease.

It localises to the host nucleus. The protein localises to the host cytoplasm. In terms of biological role, plays a role in processing non linear or branched viral DNA intermediates in order to promote the production of mature packaged unit-length linear progeny viral DNA molecules. Exhibits endonuclease and exonuclease activities and accepts both double-stranded and single-stranded DNA as substrate. Exonuclease digestion of DNA is in the 5'-&gt; 3' direction and the products are 5'-monophosphate nucleosides. Additionally, forms a recombinase with the major DNA-binding protein, which displays strand exchange activity. The polypeptide is Alkaline nuclease (Homo sapiens (Human)).